We begin with the raw amino-acid sequence, 1018 residues long: Collagen, type I, alpha 1a (1018 aa).

Residues 1–10 (QMSAGYDDKS) are compositionally biased toward basic and acidic residues. The tract at residues 1–991 (QMSAGYDDKS…SGEYWLDPDQ (991 aa)) is disordered. Residues 13–30 (MPVPGPMGPMGPRGPPGS) are compositionally biased toward pro residues. Over residues 31-58 (PGASGPQGFTGPPGEPGEAGPSGAMGPR) the composition is skewed to low complexity. Residues 67-81 (NGEDGESGKPGRGGE) are compositionally biased toward basic and acidic residues. Residues 126-136 (PRGNDGAAGAA) are compositionally biased toward low complexity. A compositionally biased stretch (pro residues) spans 138–151 (PPGPTGPAGPPGFP). Positions 152 to 170 (GGPGAKGDAGAQGGRGPEG) are enriched in gly residues. 2 stretches are compositionally biased toward low complexity: residues 171–214 (PAGA…AGAP) and 223–261 (SGPQ…APGV). The segment covering 284-296 (GARGGPGGRGFPG) has biased composition (gly residues). Composition is skewed to low complexity over residues 370-385 (VGAR…PGPK), 424-442 (AGPA…PGFQ), 452-510 (LPGE…QGMP), and 543-558 (RGLT…AGAT). Positions 568 to 577 (GPVGPGGARG) are enriched in gly residues. Composition is skewed to low complexity over residues 591 to 627 (AGFA…AGPT) and 641 to 663 (PKGA…AGRV). A compositionally biased stretch (pro residues) spans 665 to 677 (PPGPSGNPGPPGP). Low complexity-rich tracts occupy residues 701–746 (EVGA…XXPG) and 775–795 (PGLA…NEGS). The span at 819 to 829 (APGPPGAPGPV) shows a compositional bias: pro residues. A compositionally biased stretch (low complexity) spans 843–862 (PAGPAGSAGPAGPRGPAGAP). Residues 865 to 876 (RGDKGESGEAGE) show a composition bias toward basic and acidic residues. Positions 889–925 (SGSSGEQGPAGAAGPAGPRGPAGSAGSPGKDGMSGLP) are enriched in low complexity. Positions 932 to 1018 (GPRGGFDLGF…CTSHTGTWGK (87 aa)) constitute a Fibrillar collagen NC1 domain. Positions 948–959 (KAPDPFRDRDLE) are enriched in basic and acidic residues. The segment covering 963-973 (TLKSLSQQLEQ) has biased composition (polar residues).

It belongs to the fibrillar collagen family.

The protein localises to the secreted. It is found in the extracellular space. Its subcellular location is the extracellular matrix. This chain is Collagen, type I, alpha 1a, found in Epinephelus costae (Goldblotch grouper).